A 326-amino-acid polypeptide reads, in one-letter code: Protease HtpX homolog (326 aa).

2 consecutive transmembrane segments (helical) span residues 10 to 30 (LNMA…ALAV) and 41 to 61 (VGLM…QWLF). Residue His-147 participates in Zn(2+) binding. Residue Glu-148 is part of the active site. His-151 contributes to the Zn(2+) binding site. Helical transmembrane passes span 159–179 (LLMA…WIFW) and 197–217 (LLFL…LLVL). Glu-224 lines the Zn(2+) pocket.

The protein belongs to the peptidase M48B family. Zn(2+) is required as a cofactor.

The protein localises to the cell membrane. The chain is Protease HtpX homolog from Saccharolobus islandicus (strain Y.N.15.51 / Yellowstone #2) (Sulfolobus islandicus).